We begin with the raw amino-acid sequence, 615 residues long: MWNDEDNNPYGAFDSEARLSESLHSTTIESPFNHDYPPPPSSHSSNPDISDFSQHPEASDDDEGDYVGQANRAGYSHKSVYDSRIEQLLYENPDMPILITDAGKNHEGGGSFIVYTIRTGDLEVRRRYSEFASLRQTLVSLHPTLIVPPIPEKHSMADYAAKPTKAKEDAGIIDLRKRMLAVFLNRCRRMKEIREDGVWWRFLDPNVSWSEVLHSHPASSVPKNNLKAPPLDPANPTPAHAWLPVPSASAKLKSTSGTSSSPNAEAPGPEILGRFPPESRKLSEKDLDPYFINFEASTRELELLLQGNMEKVNRRTLAHLSGLSADLMELGARYNGFSLSEQSPTVATAIERVGQAADTSYIETEELSLALGANFAEPMRESAQFASVVRSVLRYRVLKRVQEDMTRDELSKKKSLLESLERSEQEAKRIEQYLNRTSPQAPTKQRSLSTSSATSSQGGTDESRPSGEETASIDSDFPPTHAEHVSQRYPESGQTSPPAHRKTSSGTFVANKIFGRISHAVHGFVDVDPERTRRDHIGKTKESLVQLEQALGVSEKDVKDASAGVLQDLKRFQKDKEADLRRYMVAYARCHLNWARKNLETWTEAKDEVDKIEAR.

The tract at residues 1–71 (MWNDEDNNPY…DEGDYVGQAN (71 aa)) is disordered. Positions 42-53 (SHSSNPDISDFS) are enriched in low complexity. The PX domain maps to 93-210 (PDMPILITDA…RFLDPNVSWS (118 aa)). Residues arginine 127, serine 129, lysine 153, and arginine 176 each coordinate a 1,2-diacyl-sn-glycero-3-phospho-(1D-myo-inositol-3-phosphate). Disordered stretches follow at residues 218-277 (ASSV…RFPP) and 432-504 (QYLN…RKTS). 2 stretches are compositionally biased toward polar residues: residues 252–263 (LKSTSGTSSSPN) and 434–446 (LNRTSPQAPTKQR). The span at 447-456 (SLSTSSATSS) shows a compositional bias: low complexity.

It belongs to the sorting nexin family.

The protein resides in the endosome membrane. It localises to the endomembrane system. May be required for cytoplasm to vacuole transport (Cvt) and pexophagy. This Emericella nidulans (strain FGSC A4 / ATCC 38163 / CBS 112.46 / NRRL 194 / M139) (Aspergillus nidulans) protein is Sorting nexin-41 (snx41).